We begin with the raw amino-acid sequence, 105 residues long: Integration host factor subunit alpha (105 aa).

The protein belongs to the bacterial histone-like protein family. As to quaternary structure, heterodimer of an alpha and a beta chain.

This protein is one of the two subunits of integration host factor, a specific DNA-binding protein that functions in genetic recombination as well as in transcriptional and translational control. In Azorhizobium caulinodans (strain ATCC 43989 / DSM 5975 / JCM 20966 / LMG 6465 / NBRC 14845 / NCIMB 13405 / ORS 571), this protein is Integration host factor subunit alpha.